Reading from the N-terminus, the 289-residue chain is Serine/threonine-protein phosphatase Pgam5, mitochondrial (289 aa).

It belongs to the phosphoglycerate mutase family. BPG-dependent PGAM subfamily. Interacts with Pk92B/ASK1.

Its subcellular location is the mitochondrion outer membrane. It catalyses the reaction O-phospho-L-seryl-[protein] + H2O = L-seryl-[protein] + phosphate. The enzyme catalyses O-phospho-L-threonyl-[protein] + H2O = L-threonyl-[protein] + phosphate. In terms of biological role, displays phosphatase activity for serine/threonine residues, and dephosphorylates and activates Pk92B kinase. Has apparently no phosphoglycerate mutase activity. In Drosophila yakuba (Fruit fly), this protein is Serine/threonine-protein phosphatase Pgam5, mitochondrial.